The chain runs to 657 residues: THO complex subunit 1 (657 aa).

At M1 the chain carries N-acetylmethionine. S2 is subject to Phosphoserine. T4 bears the Phosphothreonine mark. K31 participates in a covalent cross-link: Glycyl lysine isopeptide (Lys-Gly) (interchain with G-Cter in SUMO2). At K133 the chain carries N6-acetyllysine. The segment at 133 to 167 (KNYLLRMCNDLLRRLSKSQNTVFCGRIQLFLARLF) is dock domain; interaction with THOC2. The disordered stretch occupies residues 194-221 (QESTLGQKHTEDREEGMDVEEGEMGDDE). Acidic residues predominate over residues 206-221 (REEGMDVEEGEMGDDE). Residues 227–397 (SIPIDYNLYR…WNSWKNEGCP (171 aa)) form a dock domain; interaction with THOC2 region. K300 is modified (N6-acetyllysine). Residue K408 forms a Glycyl lysine isopeptide (Lys-Gly) (interchain with G-Cter in SUMO2) linkage. Positions 414–430 (RKRAAPEDFLGKGPNKK) match the Nuclear localization signal motif. Residues 533-569 (LPPPSEEIKTGEDEDEEDNDALLKENESPDVRRDKPI) are disordered. A Phosphoserine modification is found at S537. A Phosphothreonine modification is found at T542. The segment covering 553–569 (ALLKENESPDVRRDKPI) has biased composition (basic and acidic residues). Residue S560 is modified to Phosphoserine. The Death domain maps to 570–653 (TGEQIESFAN…DLAESLTNDT (84 aa)). A Glycyl lysine isopeptide (Lys-Gly) (interchain with G-Cter in SUMO2) cross-link involves residue K580. Residue K595 forms a Glycyl lysine isopeptide (Lys-Gly) (interchain with G-Cter in SUMO1); alternate linkage. Residue K595 forms a Glycyl lysine isopeptide (Lys-Gly) (interchain with G-Cter in SUMO2); alternate linkage.

It belongs to the THOC1 family. As to quaternary structure, component of the THO subcomplex, which is composed of THOC1, THOC2, THOC3, THOC5, THOC6 and THOC7. The THO subcomplex interacts with DDX39B to form the THO-DDX39B complex which multimerizes into a 28-subunit tetrameric assembly. Component of the transcription/export (TREX) complex at least composed of ALYREF/THOC4, DDX39B, SARNP/CIP29, CHTOP and the THO subcomplex; in the complex interacts with THOC2, THOC5 and THOC7. TREX seems to have a dynamic structure involving ATP-dependent remodeling. Binds to the hypophosphorylated form of RB1. Interacts with RNA polymerase II. Interacts with LUZP4. Interacts with THOC5. In terms of processing, expression is altered specifically during apoptosis and is accompanied by the appearance of novel forms with smaller apparent molecular mass. Post-translationally, polyubiquitinated, leading to proteasomal degradation; probably involves NEDD4. In the inner ear, specifically expressed in inner and outer hair cells (at protein level).

Its subcellular location is the nucleus. The protein localises to the nucleoplasm. It is found in the nucleus matrix. It localises to the cytoplasm. The protein resides in the cytosol. Its function is as follows. Component of the THO subcomplex of the TREX complex which is thought to couple mRNA transcription, processing and nuclear export, and which specifically associates with spliced mRNA and not with unspliced pre-mRNA. Required for efficient export of polyadenylated RNA. The THOC1-THOC2-THOC3 core complex alone is sufficient to bind export factor NXF1-NXT1 and promote ATPase activity of DDX39B. TREX is recruited to spliced mRNAs by a transcription-independent mechanism, binds to mRNA upstream of the exon-junction complex (EJC) and is recruited in a splicing- and cap-dependent manner to a region near the 5' end of the mRNA where it functions in mRNA export to the cytoplasm via the TAP/NXF1 pathway. Regulates transcriptional elongation of a subset of genes. Involved in genome stability by preventing co-transcriptional R-loop formation. May play a role in hair cell formation, hence may be involved in hearing. In terms of biological role, participates in an apoptotic pathway which is characterized by activation of caspase-6, increases in the expression of BAK1 and BCL2L1 and activation of NF-kappa-B. This pathway does not require p53/TP53, nor does the presence of p53/TP53 affect the efficiency of cell killing. Activates a G2/M cell cycle checkpoint prior to the onset of apoptosis. Apoptosis is inhibited by association with RB1. Essential for early embryonic development. Required for normal gene expression during postnatal testis development. The protein is THO complex subunit 1 (Thoc1) of Mus musculus (Mouse).